The chain runs to 303 residues: Ribosomal protein uL3 glutamine methyltransferase (303 aa).

This sequence belongs to the protein N5-glutamine methyltransferase family. PrmB subfamily.

The enzyme catalyses L-glutaminyl-[ribosomal protein uL3] + S-adenosyl-L-methionine = N(5)-methyl-L-glutaminyl-[ribosomal protein uL3] + S-adenosyl-L-homocysteine + H(+). Its function is as follows. Methylates large ribosomal subunit protein uL3 on a specific glutamine residue. This Neisseria meningitidis serogroup A / serotype 4A (strain DSM 15465 / Z2491) protein is Ribosomal protein uL3 glutamine methyltransferase.